Consider the following 192-residue polypeptide: Fe/S biogenesis protein NfuA (192 aa).

Residues Cys149 and Cys152 each contribute to the [4Fe-4S] cluster site.

Belongs to the NfuA family. Homodimer. Requires [4Fe-4S] cluster as cofactor.

Functionally, involved in iron-sulfur cluster biogenesis. Binds a 4Fe-4S cluster, can transfer this cluster to apoproteins, and thereby intervenes in the maturation of Fe/S proteins. Could also act as a scaffold/chaperone for damaged Fe/S proteins. This chain is Fe/S biogenesis protein NfuA, found in Shewanella piezotolerans (strain WP3 / JCM 13877).